The primary structure comprises 31 residues: Cyclotide mech-4 (31 aa).

Positions 1–31 (GSIPCGESCVYIPCISSLLGCSCKSKVCYKD) form a cross-link, cyclopeptide (Gly-Asp). Intrachain disulfides connect Cys5-Cys21, Cys9-Cys23, and Cys14-Cys28.

In terms of processing, this is a cyclic peptide. Post-translationally, contains 3 disulfide bonds.

Probably participates in a plant defense mechanism (Potential). Binds to and induces leakage in phospholipd membranes, particularly ones containing 1-palmitoyl-2-oleophosphatidylethanolamine (POPE). In Melicytus chathamicus (Chatham Island mahoe), this protein is Cyclotide mech-4.